A 954-amino-acid polypeptide reads, in one-letter code: Glucosidase 2 subunit alpha (954 aa).

The signal sequence occupies residues 1 to 22 (MVLLKWLVCQLVFFTAFSHAFT). 5 N-linked (GlcNAc...) asparagine glycosylation sites follow: asparagine 114, asparagine 126, asparagine 142, asparagine 173, and asparagine 345. Aspartate 537 serves as the catalytic Nucleophile. The active site involves glutamate 540. Catalysis depends on aspartate 614, which acts as the Proton donor. N-linked (GlcNAc...) asparagine glycans are attached at residues asparagine 783, asparagine 791, asparagine 867, asparagine 880, asparagine 907, and asparagine 941.

This sequence belongs to the glycosyl hydrolase 31 family. Heterodimer of a catalytic subunit alpha (ROT2) and a subunit beta (GTB1).

The protein resides in the endoplasmic reticulum. It catalyses the reaction N(4)-(alpha-D-Glc-(1-&gt;3)-alpha-D-Man-(1-&gt;2)-alpha-D-Man-(1-&gt;2)-alpha-D-Man-(1-&gt;3)-[alpha-D-Man-(1-&gt;2)-alpha-D-Man-(1-&gt;3)-[alpha-D-Man-(1-&gt;2)-alpha-D-Man-(1-&gt;6)]-alpha-D-Man-(1-&gt;6)]-beta-D-Man-(1-&gt;4)-beta-D-GlcNAc-(1-&gt;4)-beta-D-GlcNAc)-L-asparaginyl-[protein] + H2O = N(4)-(alpha-D-Man-(1-&gt;2)-alpha-D-Man-(1-&gt;2)-alpha-D-Man-(1-&gt;3)-[alpha-D-Man-(1-&gt;2)-alpha-D-Man-(1-&gt;3)-[alpha-D-Man-(1-&gt;2)-alpha-D-Man-(1-&gt;6)]-alpha-D-Man-(1-&gt;6)]-beta-D-Man-(1-&gt;4)-beta-D-GlcNAc-(1-&gt;4)-beta-D-GlcNAc)-L-asparaginyl-[protein] (N-glucan mannose isomer 9A1,2,3B1,2,3) + beta-D-glucose. It carries out the reaction N(4)-(alpha-D-Glc-(1-&gt;3)-alpha-D-Glc-(1-&gt;3)-alpha-D-Man-(1-&gt;2)-alpha-D-Man-(1-&gt;2)-alpha-D-Man-(1-&gt;3)-[alpha-D-Man-(1-&gt;2)-alpha-D-Man-(1-&gt;3)-[alpha-D-Man-(1-&gt;2)-alpha-D-Man-(1-&gt;6)]-alpha-D-Man-(1-&gt;6)]-beta-D-Man-(1-&gt;4)-beta-D-GlcNAc-(1-&gt;4)-beta-D-GlcNAc)-L-asparaginyl-[protein] + H2O = N(4)-(alpha-D-Glc-(1-&gt;3)-alpha-D-Man-(1-&gt;2)-alpha-D-Man-(1-&gt;2)-alpha-D-Man-(1-&gt;3)-[alpha-D-Man-(1-&gt;2)-alpha-D-Man-(1-&gt;3)-[alpha-D-Man-(1-&gt;2)-alpha-D-Man-(1-&gt;6)]-alpha-D-Man-(1-&gt;6)]-beta-D-Man-(1-&gt;4)-beta-D-GlcNAc-(1-&gt;4)-beta-D-GlcNAc)-L-asparaginyl-[protein] + beta-D-glucose. It participates in glycan metabolism; N-glycan metabolism. Its activity is regulated as follows. Inhibited by glucose, maltose and nigerose, and by the antibiotic deoxynojirimycin. In terms of biological role, catalytic subunit of glucosidase 2, which cleaves sequentially the 2 innermost alpha-1,3-linked glucose residues from the Glc(2)Man(9)GlcNAc(2) oligosaccharide precursor of immature glycoproteins. The chain is Glucosidase 2 subunit alpha (ROT2) from Saccharomyces cerevisiae (strain ATCC 204508 / S288c) (Baker's yeast).